Consider the following 242-residue polypeptide: Uridylate kinase (242 aa).

Residue 12–15 (KLSG) participates in ATP binding. Residues 20–25 (GQKGYG) are involved in allosteric activation by GTP. UMP is bound at residue glycine 54. Glycine 55 and arginine 59 together coordinate ATP. UMP contacts are provided by residues aspartate 74 and 135-142 (TGNPYFST). Residues glutamine 163, tyrosine 168, and aspartate 171 each contribute to the ATP site.

It belongs to the UMP kinase family. Homohexamer.

The protein localises to the cytoplasm. It carries out the reaction UMP + ATP = UDP + ADP. Its pathway is pyrimidine metabolism; CTP biosynthesis via de novo pathway; UDP from UMP (UMPK route): step 1/1. With respect to regulation, allosterically activated by GTP. Inhibited by UTP. Functionally, catalyzes the reversible phosphorylation of UMP to UDP. The sequence is that of Uridylate kinase from Desulforamulus reducens (strain ATCC BAA-1160 / DSM 100696 / MI-1) (Desulfotomaculum reducens).